The chain runs to 384 residues: F-box protein At2g07140 (384 aa).

Positions 1–46 (MTLPELPKDLVEEILSFVPATSLKRLRSTCKGWNRLFKDDKRFTRI) constitute an F-box domain.

This is F-box protein At2g07140 from Arabidopsis thaliana (Mouse-ear cress).